A 128-amino-acid chain; its full sequence is Transmembrane protein 234 homolog (128 aa).

Helical transmembrane passes span 3 to 23, 53 to 73, 80 to 100, and 104 to 124; these read TYNIISLLLVGFIWGGTNPLI, PSYTIPMLINLSGSVVFFYTL, LVVPISNSLTFLFTSLMGMLL, and VLHFKSYLGMIFVLAGVTICV.

The protein belongs to the TMEM234 family.

The protein localises to the membrane. The sequence is that of Transmembrane protein 234 homolog from Dictyostelium discoideum (Social amoeba).